The chain runs to 394 residues: Glutamyl-tRNA reductase (394 aa).

Substrate contacts are provided by residues 45-48, S99, 104-106, and Q110; these read TCNR and EEQ. C46 (nucleophile) is an active-site residue. 175 to 180 lines the NADP(+) pocket; the sequence is GLGNIG.

It belongs to the glutamyl-tRNA reductase family. In terms of assembly, homodimer.

It carries out the reaction (S)-4-amino-5-oxopentanoate + tRNA(Glu) + NADP(+) = L-glutamyl-tRNA(Glu) + NADPH + H(+). It participates in porphyrin-containing compound metabolism; protoporphyrin-IX biosynthesis; 5-aminolevulinate from L-glutamyl-tRNA(Glu): step 1/2. Functionally, catalyzes the NADPH-dependent reduction of glutamyl-tRNA(Glu) to glutamate 1-semialdehyde (GSA). The chain is Glutamyl-tRNA reductase from Caldicellulosiruptor saccharolyticus (strain ATCC 43494 / DSM 8903 / Tp8T 6331).